The primary structure comprises 438 residues: Enolase (438 aa).

Substrate is bound by residues histidine 159 and glutamate 168. Residue glutamate 211 is the Proton donor of the active site. Mg(2+) contacts are provided by aspartate 246, glutamate 297, and aspartate 322. Residues glutamate 297 and aspartate 322 each contribute to the substrate site. Catalysis depends on lysine 347, which acts as the Proton acceptor. Substrate-binding positions include 374-377 (SHRS) and lysine 398.

This sequence belongs to the enolase family. In terms of assembly, homodimer. The cofactor is Mg(2+).

It localises to the cytoplasm. It carries out the reaction (2R)-2-phosphoglycerate = phosphoenolpyruvate + H2O. Its pathway is carbohydrate degradation; glycolysis; pyruvate from D-glyceraldehyde 3-phosphate: step 4/5. The sequence is that of Enolase (enoA) from Aspergillus fumigatus (strain ATCC MYA-4609 / CBS 101355 / FGSC A1100 / Af293) (Neosartorya fumigata).